Consider the following 460-residue polypeptide: Exodeoxyribonuclease 7 large subunit (460 aa).

The protein belongs to the XseA family. In terms of assembly, heterooligomer composed of large and small subunits.

It is found in the cytoplasm. The catalysed reaction is Exonucleolytic cleavage in either 5'- to 3'- or 3'- to 5'-direction to yield nucleoside 5'-phosphates.. In terms of biological role, bidirectionally degrades single-stranded DNA into large acid-insoluble oligonucleotides, which are then degraded further into small acid-soluble oligonucleotides. This chain is Exodeoxyribonuclease 7 large subunit, found in Edwardsiella ictaluri (strain 93-146).